A 1183-amino-acid polypeptide reads, in one-letter code: MGAVKSRTITSADVDADEQLQHPHSHAHHHSMRNGHQHNGSISSGTLQKQDLRYDIGCSSQYQHVRQPSLRSRSQQPMPTTDELDRRFAKVLASMDLPPDKAKLLRNYDDEKKWDMICDQEMVQAKDPPSHYLSKLRTYLDPKASRSHRLYLFYFLCQKRKMVGESTSTQVLRDLEISLRTNHIEWVKEFLDDTNQGLDALVDYLSFRLQMMRHEQRLQGVLCASEERLNLTNGGDGGEIVMGNSSSVSPGGGGGLLSHGNSTGHGLANGTLDSRQQHTMSYGFLRPTIADALDSPSLKRRSRHIAKLNMGAATDDIHVSIMCLRAIMNNKYGFNMVIQHREAINCIALSLIHKSLRTKALVLELLAAICLVKGGHEIILGSFDNFKDVCQEKRRFQTLMEYFMNFEAFNIDFMVACMQFMNIVVHSVEDMNYRVHLQYEFTALGLDKYLERIRLTESEELKVQISAYLDNVFDVAALMEDSETKTSALERVQELEDQLEREIDRNSEFLYKYAELESESLTLKTEREQLAMIRQKLEEELTVMQRMLQHNEQELKKRDTLLHTKNMELQTLSRSLPRSASSGDGSLANGGLMAGSTSGAASLTLPPPPPPMPASPTASSAAPPPPPPPAPPAPPPPPGFSPLGSPSGSLASTAPSPPHAPPMLSSFQPPPPPVAGFMPAPDGAMTIKRKVPTKYKLPTLNWIALKPNQVRGTIFNELDDEKIFKQIDFNEFEERFKIGIGGALRNGSNGTEVDGSLQSSKRFKRPDNVSLLEHTRLRNIAISRRKLGMPIDDVIAAIHSLDLKKLSLENVELLQKMVPTDAEVKSYKEYIIERKDQQLLTEEDKFMLQLSRVERISSKLAIMNYMGNFVDSVHLISPQVQSIAGASTSLKQSRKFKAVLEIVLAFGNYLNSNKRGPAYGFKLQSLDTLIDTKSTDKRSSLLHYIVATIRAKFPELLNFESELYGTDKAASVALENVVADVQELEKGMDLVRKEAELRVKGAQTHILRDFLNNSEDKLKKIKSDLRHAQEAFKECVEYFGDSSRNADAAAFFALIVRFTRAFKQHDQENEQRLRLEKAAALAASKKENDQVLMRNKVNQKKQQLPSNGALSLQEAVINELKSKAHSVREKKLLQQDEVYNGALEDILLGLKSEPYRRADAVRRSQRRRIDNNRLSRTLEEMDC.

2 disordered regions span residues 1–44 (MGAV…SISS) and 63–82 (QHVR…PTTD). The segment covering 23 to 36 (PHSHAHHHSMRNGH) has biased composition (basic residues). Residues 63–79 (QHVRQPSLRSRSQQPMP) are compositionally biased toward polar residues. One can recognise a GBD/FH3 domain in the interval 76–559 (QPMPTTDELD…HNEQELKKRD (484 aa)). Serine 225 carries the phosphoserine modification. Over residues 572-584 (LSRSLPRSASSGD) the composition is skewed to polar residues. Residues 572–681 (LSRSLPRSAS…PPVAGFMPAP (110 aa)) are disordered. Pro residues-rich tracts occupy residues 605–614 (LPPPPPPMPA) and 622–640 (APPP…PPGF). Residues 641-654 (SPLGSPSGSLASTA) are compositionally biased toward low complexity. The FH2 domain occupies 687–1088 (IKRKVPTKYK…AALAASKKEN (402 aa)). Positions 1136-1169 (DEVYNGALEDILLGLKSEPYRRADAVRRSQRRRI) constitute a DAD domain.

The protein belongs to the formin homology family. In terms of assembly, self-associates. Interacts (via GBD/FH3 domain) with Cdc42; the interaction is stronger with the GTP bound form of Cdc42.

Together with Cdc42, involved in establishment of planar cell polarity in the developing compound eye by contributing to ommatidial rotation. Together with DAAM and Cdc42, has a role in neuronal development of mushroom bodies. This is Formin-like protein from Drosophila melanogaster (Fruit fly).